The sequence spans 578 residues: Signal peptide peptidase-like 2B (578 aa).

The N-terminal stretch at 1 to 19 (MAAARLAAALLLLAAQVAC) is a signal peptide. Over 20–168 (EFGVLRVVSQ…APSEPVMDYN (149 aa)) the chain is Lumenal. The region spanning 61-145 (LRDLSTTQLC…LLSHRDLQDI (85 aa)) is the PA domain. N-linked (GlcNAc...) asparagine glycosylation is found at N91 and N123. A helical transmembrane segment spans residues 169-189 (MVIIFVMAVGTVAIGGYWAGS). Topologically, residues 190–216 (HDVKKYMKHKRDDGPEKQEDEAVDVTP) are cytoplasmic. Residues 217 to 237 (VMICVFVVMCCFMLVLLYYFY) traverse the membrane as a helical segment. Over 238–239 (DR) the chain is Lumenal. A helical membrane pass occupies residues 240-260 (LVYVIIGIFCLASSTGLYSCL). Residues 261 to 286 (APFVRKLPFCTCRVPDNNLPYFHKRP) are Cytoplasmic-facing. A helical membrane pass occupies residues 287–307 (QARMLLLALFCVTVSVVWGIF). Residues 308–312 (RNEDQ) lie on the Lumenal side of the membrane. The helical transmembrane segment at 313–333 (WAWVLQDTLGIAFCLYMLKTI) threads the bilayer. Topologically, residues 334–341 (RLPTFKAC) are cytoplasmic. Residues 342–362 (TLLLLVLFIYDIFFVFITPFL) form a helical membrane-spanning segment. The active site involves D352. Residues 363–405 (TKSGNSIMVEVATGPSNSSTHEKLPMVLKVPRLNTSPLSLCDR) are Lumenal-facing. Residues 406–426 (PFSLLGFGDILVPGLLVAYCH) form a helical membrane-spanning segment. D414 is a catalytic residue. The Cytoplasmic segment spans residues 427–438 (RFDIQVQSSRIY). The helical transmembrane segment at 439–459 (FVACTIAYGLGLLVTFVALVL) threads the bilayer. The Lumenal segment spans residues 460 to 463 (MQRG). Residues 464–484 (QPALLYLVPCTLLTSCTVALW) form a helical membrane-spanning segment. Residues 465–467 (PAL) carry the PAL motif. Over 485-578 (RRELGAFWTG…IPVVKPETSA (94 aa)) the chain is Cytoplasmic. A disordered region spans residues 502–578 (PQTPWAATQG…IPVVKPETSA (77 aa)). Residues 520-529 (SSLSEQPPSE) show a composition bias toward low complexity.

The protein belongs to the peptidase A22B family. Monomer. Homodimer. Interacts with ITM2B and TNF. In terms of processing, glycosylated.

Its subcellular location is the cell membrane. The protein localises to the golgi apparatus membrane. It is found in the lysosome membrane. It localises to the endosome membrane. The protein resides in the membrane. Functionally, intramembrane-cleaving aspartic protease (I-CLiP) that cleaves type II membrane signal peptides in the hydrophobic plane of the membrane. Functions in ITM2B and TNF processing. Catalyzes the intramembrane cleavage of the anchored fragment of shed TNF-alpha (TNF), which promotes the release of the intracellular domain (ICD) for signaling to the nucleus. May play a role in the regulation of innate and adaptive immunity. This Mus musculus (Mouse) protein is Signal peptide peptidase-like 2B.